The chain runs to 468 residues: Putative ankyrin repeat protein R580 (468 aa).

ANK repeat units follow at residues 12–41, 189–218, 249–278, 336–365, 367–393, and 394–423; these read DYFDPINLSIKDGGEKTIDIIDCERYTLID, VINKSLNFASKSNMSELAIFLVDNGAEINC, CHFDLVEAVFNSGSLEMIETFIDFGMKINS, SFDNALVSTINAGKFKNAEYLLFSGANINF, NMPTNCMFKINFQTIKFLIDNNFDLEI, and HGTLILNKSLLNGYYDCANILIENGVKFSL.

This is Putative ankyrin repeat protein R580 from Acanthamoeba polyphaga (Amoeba).